Reading from the N-terminus, the 273-residue chain is MVAASKEFVFHHTFKDVSQLEDGDFFKSPEEIHYNAEWFILVIRTKDQLEAYLHCDNEKDDNVAWTVDAEFSLKIASSSGSYAMKFQKGCFDGFGLGWNDFVSWDSLTEDFLYDNSFTIEACVKITKMTGFSKDVLRSFDESEKRFSDVILVVGDEKFYVLKLFLASHSSYFNALFLGKFKEADQSEVTLQNIDPTDFQSLLEVLYGEPAIDDGTIDGVLLLAHMLDVTLAIRKCEEFLIEKSMKSMRELLKMANQYQLENLKTVCISKINTI.

The region spanning 7-123 is the MATH domain; it reads EFVFHHTFKD…DNSFTIEACV (117 aa). Residues 147–206 enclose the BTB domain; the sequence is SDVILVVGDEKFYVLKLFLASHSSYFNALFLGKFKEADQSEVTLQNIDPTDFQSLLEVLY.

Interacts with cul-3.

It participates in protein modification; protein ubiquitination. Functionally, probable substrate-specific adapter of an E3 ubiquitin-protein ligase complex which mediates the ubiquitination and subsequent proteasomal degradation of target proteins. This chain is BTB and MATH domain-containing protein 15 (bath-15), found in Caenorhabditis elegans.